A 664-amino-acid polypeptide reads, in one-letter code: Methionine--tRNA ligase (664 aa).

Positions 15-25 match the 'HIGH' region motif; sequence YYPSGKAHIGH. Positions 310-314 match the 'KMSKS' region motif; that stretch reads KMSKS. K313 contacts ATP. The tRNA-binding domain maps to 563-664; the sequence is DFDKIDLRVA…SALPNGAKVK (102 aa).

The protein belongs to the class-I aminoacyl-tRNA synthetase family. MetG type 2B subfamily. As to quaternary structure, homodimer.

The protein localises to the cytoplasm. The enzyme catalyses tRNA(Met) + L-methionine + ATP = L-methionyl-tRNA(Met) + AMP + diphosphate. In terms of biological role, is required not only for elongation of protein synthesis but also for the initiation of all mRNA translation through initiator tRNA(fMet) aminoacylation. This chain is Methionine--tRNA ligase (metG), found in Listeria innocua serovar 6a (strain ATCC BAA-680 / CLIP 11262).